The chain runs to 335 residues: Serpentine receptor class XA 10 (335 aa).

Over 1 to 10 (MDVDAAVVKR) the chain is Extracellular. A helical membrane pass occupies residues 11–31 (IALWVYETCSVFNLFYCITLS). The Cytoplasmic segment spans residues 32-46 (LAIKTSKNNALPATY). Residues 47-67 (IYNMAISNALLVIFGIMVYIL) form a helical membrane-spanning segment. The Extracellular portion of the chain corresponds to 68–82 (PYYMSDKTYKTYRDS). Residues 83–103 (IGAMISVGVTFNYLHPMLTLI) traverse the membrane as a helical segment. Residues 104–126 (LMTINRIAVVVSMQASQLFTSSK) are Cytoplasmic-facing. The chain crosses the membrane as a helical span at residues 127 to 147 (IWLYTSFHMTANFACLIIPYL). Residues 148–177 (SECRINYDIRKVGFISECAPDRHQITTFSN) lie on the Extracellular side of the membrane. A helical membrane pass occupies residues 178 to 198 (YYSVFFPFVAFFFNVLVIINF). The Cytoplasmic portion of the chain corresponds to 199 to 238 (KLQRSPTYTKIKNMFRRGNGDQFTSMPSDVLKAKKKTERM). A helical transmembrane segment spans residues 239–259 (LMIQAFITAFYLSVYELTSLV). The Extracellular portion of the chain corresponds to 260-276 (LRVVPELFGNLSLDGKL). Residues 277–297 (AFTYFRLAQVPCHVFLVYFIF) form a helical membrane-spanning segment. The Cytoplasmic segment spans residues 298–319 (TPVTRKIYMDFVRERVFCMKPA).

This sequence belongs to the nematode receptor-like protein srxa family.

The protein localises to the membrane. In Caenorhabditis elegans, this protein is Serpentine receptor class XA 10 (srxa-10).